The sequence spans 588 residues: Aspartate--tRNA ligase (588 aa).

E172 is a binding site for L-aspartate. The segment at 196-199 (QLFK) is aspartate. An L-aspartate-binding site is contributed by R218. ATP contacts are provided by residues 218–220 (RDE) and Q227. H449 is a binding site for L-aspartate. E483 contacts ATP. R490 serves as a coordination point for L-aspartate. Position 535-538 (535-538 (GLDR)) interacts with ATP.

Belongs to the class-II aminoacyl-tRNA synthetase family. Type 1 subfamily. As to quaternary structure, homodimer.

It localises to the cytoplasm. It carries out the reaction tRNA(Asp) + L-aspartate + ATP = L-aspartyl-tRNA(Asp) + AMP + diphosphate. Its function is as follows. Catalyzes the attachment of L-aspartate to tRNA(Asp) in a two-step reaction: L-aspartate is first activated by ATP to form Asp-AMP and then transferred to the acceptor end of tRNA(Asp). The protein is Aspartate--tRNA ligase of Histophilus somni (strain 2336) (Haemophilus somnus).